Reading from the N-terminus, the 241-residue chain is Proteasome subunit alpha type-5 (241 aa).

An N-acetylmethionine modification is found at methionine 1. Serine 16 is modified (phosphoserine). At threonine 55 the chain carries Phosphothreonine. Phosphoserine occurs at positions 56 and 63. The O-linked (GlcNAc) serine glycan is linked to serine 198.

Belongs to the peptidase T1A family. The 26S proteasome consists of a 20S proteasome core and two 19S regulatory subunits. The 20S proteasome core is a barrel-shaped complex made of 28 subunits that are arranged in four stacked rings. The two outer rings are each formed by seven alpha subunits, and the two inner rings are formed by seven beta subunits. The proteolytic activity is exerted by three beta-subunits PSMB5, PSMB6 and PSMB7. PSMA5 interacts directly with the PSMG1-PSMG2 heterodimer which promotes 20S proteasome assembly.

It is found in the cytoplasm. It localises to the nucleus. Its function is as follows. Component of the 20S core proteasome complex involved in the proteolytic degradation of most intracellular proteins. This complex plays numerous essential roles within the cell by associating with different regulatory particles. Associated with two 19S regulatory particles, forms the 26S proteasome and thus participates in the ATP-dependent degradation of ubiquitinated proteins. The 26S proteasome plays a key role in the maintenance of protein homeostasis by removing misfolded or damaged proteins that could impair cellular functions, and by removing proteins whose functions are no longer required. Associated with the PA200 or PA28, the 20S proteasome mediates ubiquitin-independent protein degradation. This type of proteolysis is required in several pathways including spermatogenesis (20S-PA200 complex) or generation of a subset of MHC class I-presented antigenic peptides (20S-PA28 complex). The polypeptide is Proteasome subunit alpha type-5 (PSMA5) (Bos taurus (Bovine)).